The primary structure comprises 410 residues: Platelet-activating factor acetylhydrolase IB subunit alpha (410 aa).

The required for self-association and interaction with PAFAH1B2 and PAFAH1B3 stretch occupies residues 1–38 (MVLSQRQRDELNRAIADYLRSNGYEEAYSVFKKEAELD). The tract at residues 1–66 (MVLSQRQRDE…SVIRLQKKVM (66 aa)) is interaction with NDE1. Residues 1–102 (MVLSQRQRDE…EWIPRPPEKY (102 aa)) are interaction with NDEL1. In terms of domain architecture, LisH spans 7-39 (QRDELNRAIADYLRSNGYEEAYSVFKKEAELDM). An N6-acetyllysine modification is found at K53. Residues 56–82 (TSVIRLQKKVMELESKLNEAKEEFTSG) are a coiled coil. The tract at residues 83-410 (GPLGQKRDPK…DQTVKVWECR (328 aa)) is interaction with dynein and dynactin. WD repeat units follow at residues 106–147 (GHRS…RTLK), 148–187 (GHTDSVQDISFDHSGKLLASCSADMTIKLWDFQGFECIRT), 190–229 (GHDHNVSSVAIMPNGDHIVSASRDKTIKMWEVQTGYCVKT), 232–271 (GHREWVRMVRPNQDGTLIASCSNDQTVRVWVVATKECKAE), 274–333 (EHEH…CLMT), 336–377 (GHDN…KTLN), and 379–410 (HEHFVTSLDFHKTAPYVVTGFVDQTVKVWECR). Residue S109 is modified to Phosphoserine. An interaction with DCX region spans residues 367 to 409 (YKNKRCMKTLNAHEHFVTSLDFHKTAPYVVTGFVDQTVKVWEC). Positions 388-410 (FHKTAPYVVTGFVDQTVKVWECR) are interaction with NDEL1.

The protein belongs to the WD repeat LIS1/nudF family. In terms of assembly, can self-associate. Component of the cytosolic PAF-AH (I) heterotetrameric enzyme, which is composed of PAFAH1B1 (beta), PAFAH1B2 (alpha2) and PAFAH1B3 (alpha1) subunits. The catalytic activity of the enzyme resides in the alpha1 (PAFAH1B3) and alpha2 (PAFAH1B2) subunits, whereas the beta subunit (PAFAH1B1) has regulatory activity. Trimer formation is not essential for the catalytic activity. Interacts with the catalytic dimer of PAF-AH (I) heterotetrameric enzyme: interacts with PAFAH1B2 homodimer (alpha2/alpha2 homodimer), PAFAH1B3 homodimer (alpha1/alpha1 homodimer) and PAFAH1B2-PAFAH1B3 heterodimer (alpha2/alpha1 heterodimer). Interacts with DCX, dynein, dynactin, IQGAP1, KATNB1, NDE1, NDEL1, NUDC and RSN. Interacts with DISC1, and this interaction is enhanced by NDEL1. Interacts with DAB1 when DAB1 is phosphorylated in response to RELN/reelin signaling. Interacts with INTS13. Interacts with DCDC1.

It is found in the cytoplasm. The protein localises to the cytoskeleton. The protein resides in the microtubule organizing center. Its subcellular location is the centrosome. It localises to the spindle. It is found in the nucleus membrane. Functionally, regulatory subunit (beta subunit) of the cytosolic type I platelet-activating factor (PAF) acetylhydrolase (PAF-AH (I)), an enzyme that catalyzes the hydrolyze of the acetyl group at the sn-2 position of PAF and its analogs and participates in PAF inactivation. Regulates the PAF-AH (I) activity in a catalytic dimer composition-dependent manner. Positively regulates the activity of the minus-end directed microtubule motor protein dynein. May enhance dynein-mediated microtubule sliding by targeting dynein to the microtubule plus end. Required for several dynein- and microtubule-dependent processes such as the maintenance of Golgi integrity, the peripheral transport of microtubule fragments and the coupling of the nucleus and centrosome. Required during brain development for the proliferation of neuronal precursors and the migration of newly formed neurons from the ventricular/subventricular zone toward the cortical plate. Neuronal migration involves a process called nucleokinesis, whereby migrating cells extend an anterior process into which the nucleus subsequently translocates. During nucleokinesis dynein at the nuclear surface may translocate the nucleus towards the centrosome by exerting force on centrosomal microtubules. Also required for proper activation of Rho GTPases and actin polymerization at the leading edge of locomoting cerebellar neurons and postmigratory hippocampal neurons in response to calcium influx triggered via NMDA receptors. May also play a role in other forms of cell locomotion including the migration of fibroblasts during wound healing. Required for dynein recruitment to microtubule plus ends and BICD2-bound cargos. May modulate the Reelin pathway through interaction of the PAF-AH (I) catalytic dimer with VLDLR. This chain is Platelet-activating factor acetylhydrolase IB subunit alpha, found in Pan troglodytes (Chimpanzee).